Here is a 230-residue protein sequence, read N- to C-terminus: UPF0758 protein Glov_0523 (230 aa).

One can recognise an MPN domain in the interval 108–230 (RFTSPAQVFD…YFSFVESGLL (123 aa)). Residues His-179, His-181, and Asp-192 each contribute to the Zn(2+) site. The short motif at 179–192 (HNHPSGDPAPSRED) is the JAMM motif element.

It belongs to the UPF0758 family.

The sequence is that of UPF0758 protein Glov_0523 from Trichlorobacter lovleyi (strain ATCC BAA-1151 / DSM 17278 / SZ) (Geobacter lovleyi).